The following is a 464-amino-acid chain: Formin-like protein 19 (464 aa).

Positions 1 to 74 (MSLVDISGAY…PRPCSRPPKT (74 aa)) are disordered. The segment covering 14–70 (PLPPPPPPLMRRRAPLPPPPPPPLMRRRAPPPPPPPLMRRRAPPPPPPPPLPRPCSR) has biased composition (pro residues). An FH2 domain is found at 68–462 (CSRPPKTKCS…KAAKEAEMEK (395 aa)).

The protein belongs to the formin-like family. Class-II subfamily.

This chain is Formin-like protein 19 (FH19), found in Arabidopsis thaliana (Mouse-ear cress).